We begin with the raw amino-acid sequence, 396 residues long: Orotidine 5'-phosphate decarboxylase (396 aa).

Residues D46, 68–70 (KTH), 103–112 (DRKFVDIGST), Y346, and R365 contribute to the substrate site. K105 (proton donor) is an active-site residue.

This sequence belongs to the OMP decarboxylase family.

The enzyme catalyses orotidine 5'-phosphate + H(+) = UMP + CO2. The protein operates within pyrimidine metabolism; UMP biosynthesis via de novo pathway; UMP from orotate: step 2/2. This Sordaria macrospora (strain ATCC MYA-333 / DSM 997 / K(L3346) / K-hell) protein is Orotidine 5'-phosphate decarboxylase (URA3).